The chain runs to 369 residues: Glutamate 5-kinase (369 aa).

Lysine 9 is an ATP binding site. The substrate site is built by serine 49, aspartate 136, and asparagine 148. Residues 168–169 (TD) and 210–216 (TGGMLTK) contribute to the ATP site. Positions 275–355 (QGSIWVDKGA…KGVLIYRDDW (81 aa)) constitute a PUA domain.

This sequence belongs to the glutamate 5-kinase family.

The protein localises to the cytoplasm. It carries out the reaction L-glutamate + ATP = L-glutamyl 5-phosphate + ADP. It participates in amino-acid biosynthesis; L-proline biosynthesis; L-glutamate 5-semialdehyde from L-glutamate: step 1/2. Its function is as follows. Catalyzes the transfer of a phosphate group to glutamate to form L-glutamate 5-phosphate. The sequence is that of Glutamate 5-kinase from Streptococcus pneumoniae (strain 70585).